The chain runs to 464 residues: Glutamate--tRNA ligase (464 aa).

The short motif at 10 to 20 (PSPTGHLHLGG) is the 'HIGH' region element. Zn(2+) is bound by residues Cys99, Cys101, Cys126, and Glu128. Residues 236–240 (KLSKR) carry the 'KMSKS' region motif. Lys239 serves as a coordination point for ATP.

The protein belongs to the class-I aminoacyl-tRNA synthetase family. Glutamate--tRNA ligase type 1 subfamily. As to quaternary structure, monomer. Zn(2+) is required as a cofactor.

The protein localises to the cytoplasm. The enzyme catalyses tRNA(Glu) + L-glutamate + ATP = L-glutamyl-tRNA(Glu) + AMP + diphosphate. Catalyzes the attachment of glutamate to tRNA(Glu) in a two-step reaction: glutamate is first activated by ATP to form Glu-AMP and then transferred to the acceptor end of tRNA(Glu). The polypeptide is Glutamate--tRNA ligase (Oleidesulfovibrio alaskensis (strain ATCC BAA-1058 / DSM 17464 / G20) (Desulfovibrio alaskensis)).